The sequence spans 354 residues: Guanine nucleotide-binding protein G(t) subunit alpha-2 (354 aa).

Residues 1-27 form a disordered region; it reads MGSGASAEDKELAKRSKELEKKLQEDA. Gly2 carries N-myristoyl glycine lipidation. The segment covering 7-27 has biased composition (basic and acidic residues); it reads AEDKELAKRSKELEKKLQEDA. Positions 32–354 constitute a G-alpha domain; the sequence is KTVKLLLLGA…KENLKDCGLF (323 aa). The interval 35 to 48 is G1 motif; it reads KLLLLGAGESGKST. Residues 40–47, 175–181, 200–204, 269–272, and Ala326 contribute to the GTP site; these read GAGESGKS, LRSRVKT, DVGGQ, and NKKD. Mg(2+) is bound by residues Ser47 and Thr181. A G2 motif region spans residues 173–181; that stretch reads DVLRSRVKT. Residues 196-205 are G3 motif; that stretch reads FRMFDVGGQR. The interval 265-272 is G4 motif; the sequence is VLFLNKKD. Residues 324 to 329 are G5 motif; the sequence is TCATDT.

Belongs to the G-alpha family. G(i/o/t/z) subfamily. G proteins are composed of 3 units; alpha, beta and gamma. The alpha chain contains the guanine nucleotide binding site. In terms of tissue distribution, retinal rod outer segment.

It localises to the cell projection. It is found in the cilium. The protein localises to the photoreceptor outer segment. The protein resides in the photoreceptor inner segment. Its function is as follows. Guanine nucleotide-binding proteins (G proteins) are involved as modulators or transducers in various transmembrane signaling systems. Transducin is an amplifier and one of the transducers of a visual impulse that performs the coupling between rhodopsin and cGMP-phosphodiesterase. In Bos taurus (Bovine), this protein is Guanine nucleotide-binding protein G(t) subunit alpha-2 (GNAT2).